We begin with the raw amino-acid sequence, 394 residues long: MTLQESDKFATKAIHAGEHVDVHGSVIEPISLSTTFKQSSPANPIGTYEYSRSQNPNRENLERAVAALENAQYGLAFSSGSATTATILQSLPQGSHAVSIGDVYGGTHRYFTKVANAHGVETSFTNDLLNDLPQLIKENTKLVWIETPTNPTLKVTDIQKVADLIKKHAAGQDVILVVDNTFLSPYISNPLNFGADIVVHSATKYINGHSDVVLGVLATNNKPLYERLQFLQNAIGAIPSPFDAWLTHRGLKTLHLRVRQAALSANKIAEFLAADKENVVAVNYPGLKTHPNYDVVLKQHRDALGGGMISFRIKGGAEAASKFASSTRLFTLAESLGGIESLLEVPAVMTHGGIPKEAREASGVFDDLVRISVGIEDTDDLLEDIKQALKQATN.

The interval 37-56 is disordered; the sequence is KQSSPANPIGTYEYSRSQNP. The substrate site is built by R52, Y104, and R109. K204 carries the N6-(pyridoxal phosphate)lysine modification. E334 provides a ligand contact to substrate. Phosphoserine is present on S362.

This sequence belongs to the trans-sulfuration enzymes family. As to quaternary structure, homotetramer. It depends on pyridoxal 5'-phosphate as a cofactor.

The protein localises to the cytoplasm. It carries out the reaction L,L-cystathionine + H2O = 2-oxobutanoate + L-cysteine + NH4(+). It participates in amino-acid biosynthesis; L-cysteine biosynthesis; L-cysteine from L-homocysteine and L-serine: step 2/2. Catalyzes the production of cysteine from cystathionine in the reverse transsulfuration pathway for the biosynthesis of sulfur-containing amino acids cysteine and methionine. In this pathway, homocysteine sulfur is converted to cysteine sulfur. Also has cystathionine beta-lyase and cystathionine gamma-synthase activities in vitro. Cystathionine beta-lyase may be physiological, while cystathionine gamma-synthase activity is not, as the required substrate O-succinyl-L-homoserine(OSH) does not occur naturally in S.cerevisiae. This Saccharomyces cerevisiae (strain ATCC 204508 / S288c) (Baker's yeast) protein is Cystathionine gamma-lyase.